Reading from the N-terminus, the 121-residue chain is Small ribosomal subunit protein uS13 (121 aa).

Residues 90–121 (RHRRGLPTRGQNTKNNARTRKGPTKTVAGKKK) form a disordered region. Positions 106–121 (ARTRKGPTKTVAGKKK) are enriched in basic residues.

This sequence belongs to the universal ribosomal protein uS13 family. As to quaternary structure, part of the 30S ribosomal subunit. Forms a loose heterodimer with protein S19. Forms two bridges to the 50S subunit in the 70S ribosome.

In terms of biological role, located at the top of the head of the 30S subunit, it contacts several helices of the 16S rRNA. In the 70S ribosome it contacts the 23S rRNA (bridge B1a) and protein L5 of the 50S subunit (bridge B1b), connecting the 2 subunits; these bridges are implicated in subunit movement. Contacts the tRNAs in the A and P-sites. The sequence is that of Small ribosomal subunit protein uS13 from Enterococcus faecalis (strain ATCC 700802 / V583).